The chain runs to 101 residues: Apolipoprotein C-II (101 aa).

An N-terminal signal peptide occupies residues 1–26 (MGTRYFLALFLILLVLGFKVQGVAMA). The tract at residues 66–74 (TMDEKIRDI) is lipid binding. A lipoprotein lipase cofactor region spans residues 78 to 101 (STAAVTTYAGIFTDQLLSLLKGDQ).

Belongs to the apolipoprotein C2 family. Proapolipoprotein C-II is synthesized as a sialic acid containing glycoprotein which is subsequently desialylated prior to its proteolytic processing. Post-translationally, proapolipoprotein C-II undergoes proteolytic cleavage of its N-terminal hexapeptide to generate apolipoprotein C-II. In bovine, proapolipoprotein C-II was found to be the minor form whereas apolipoprotein C-II was found to be the major form in plasma.

The protein resides in the secreted. In terms of biological role, component of chylomicrons, very low-density lipoproteins (VLDL), low-density lipoproteins (LDL), and high-density lipoproteins (HDL) in plasma. Plays an important role in lipoprotein metabolism as an activator of lipoprotein lipase. Both proapolipoprotein C-II and apolipoprotein C-II can activate lipoprotein lipase. In Camelus dromedarius (Dromedary), this protein is Apolipoprotein C-II (APOC2).